Reading from the N-terminus, the 168-residue chain is Thioredoxin Y, chloroplastic (168 aa).

A chloroplast-targeting transit peptide spans 1-58 (MAAFTSTTTAAAASPTPCRPAALVARSSAAPLRSAAPVVVAAGLRRAAAPSRRGATLR). Positions 59–165 (VQAKKQTFSS…LIQQIESALE (107 aa)) constitute a Thioredoxin domain. Catalysis depends on nucleophile residues cysteine 89 and cysteine 92. Cysteine 89 and cysteine 92 are oxidised to a cystine.

It belongs to the thioredoxin family. Plant Y-type subfamily.

Its subcellular location is the plastid. The protein localises to the chloroplast. Its function is as follows. Probable thiol-disulfide oxidoreductase that may participate in various redox reactions. This is Thioredoxin Y, chloroplastic from Oryza sativa subsp. japonica (Rice).